Here is a 159-residue protein sequence, read N- to C-terminus: Putative pre-16S rRNA nuclease (159 aa).

This sequence belongs to the YqgF nuclease family.

Its subcellular location is the cytoplasm. Its function is as follows. Could be a nuclease involved in processing of the 5'-end of pre-16S rRNA. The chain is Putative pre-16S rRNA nuclease from Bartonella henselae (strain ATCC 49882 / DSM 28221 / CCUG 30454 / Houston 1) (Rochalimaea henselae).